The following is a 362-amino-acid chain: Phosphoserine aminotransferase (362 aa).

Serine 9 and arginine 42 together coordinate L-glutamate. Residues glycine 76 to arginine 77, tryptophan 102, threonine 153, aspartate 174, and glutamine 197 contribute to the pyridoxal 5'-phosphate site. The residue at position 198 (lysine 198) is an N6-(pyridoxal phosphate)lysine. Position 239–240 (asparagine 239–threonine 240) interacts with pyridoxal 5'-phosphate.

It belongs to the class-V pyridoxal-phosphate-dependent aminotransferase family. SerC subfamily. Homodimer. Pyridoxal 5'-phosphate is required as a cofactor.

It localises to the cytoplasm. It carries out the reaction O-phospho-L-serine + 2-oxoglutarate = 3-phosphooxypyruvate + L-glutamate. The enzyme catalyses 4-(phosphooxy)-L-threonine + 2-oxoglutarate = (R)-3-hydroxy-2-oxo-4-phosphooxybutanoate + L-glutamate. Its pathway is amino-acid biosynthesis; L-serine biosynthesis; L-serine from 3-phospho-D-glycerate: step 2/3. It participates in cofactor biosynthesis; pyridoxine 5'-phosphate biosynthesis; pyridoxine 5'-phosphate from D-erythrose 4-phosphate: step 3/5. In terms of biological role, catalyzes the reversible conversion of 3-phosphohydroxypyruvate to phosphoserine and of 3-hydroxy-2-oxo-4-phosphonooxybutanoate to phosphohydroxythreonine. This is Phosphoserine aminotransferase from Escherichia coli (strain ATCC 8739 / DSM 1576 / NBRC 3972 / NCIMB 8545 / WDCM 00012 / Crooks).